Reading from the N-terminus, the 220-residue chain is N-(5'-phosphoribosyl)anthranilate isomerase (220 aa).

This sequence belongs to the TrpF family.

The enzyme catalyses N-(5-phospho-beta-D-ribosyl)anthranilate = 1-(2-carboxyphenylamino)-1-deoxy-D-ribulose 5-phosphate. The protein operates within amino-acid biosynthesis; L-tryptophan biosynthesis; L-tryptophan from chorismate: step 3/5. The sequence is that of N-(5'-phosphoribosyl)anthranilate isomerase from Xylella fastidiosa (strain M12).